A 35-amino-acid chain; its full sequence is Dermonecrotic toxin LrSicTox-alphaI-1 (35 aa).

His-11 is a catalytic residue. Asp-33 is a Mg(2+) binding site.

Belongs to the arthropod phospholipase D family. Class II subfamily. Mg(2+) serves as cofactor. In terms of processing, contains 2 disulfide bonds. In terms of tissue distribution, expressed by the venom gland.

It is found in the secreted. The enzyme catalyses an N-(acyl)-sphingosylphosphocholine = an N-(acyl)-sphingosyl-1,3-cyclic phosphate + choline. It catalyses the reaction an N-(acyl)-sphingosylphosphoethanolamine = an N-(acyl)-sphingosyl-1,3-cyclic phosphate + ethanolamine. The catalysed reaction is a 1-acyl-sn-glycero-3-phosphocholine = a 1-acyl-sn-glycero-2,3-cyclic phosphate + choline. It carries out the reaction a 1-acyl-sn-glycero-3-phosphoethanolamine = a 1-acyl-sn-glycero-2,3-cyclic phosphate + ethanolamine. Functionally, dermonecrotic toxins cleave the phosphodiester linkage between the phosphate and headgroup of certain phospholipids (sphingolipid and lysolipid substrates), forming an alcohol (often choline) and a cyclic phosphate. This toxin acts on sphingomyelin (SM). It may also act on ceramide phosphoethanolamine (CPE), lysophosphatidylcholine (LPC) and lysophosphatidylethanolamine (LPE), but not on lysophosphatidylserine (LPS), and lysophosphatidylglycerol (LPG). It acts by transphosphatidylation, releasing exclusively cyclic phosphate products as second products. Induces dermonecrosis, hemolysis, increased vascular permeability, edema, inflammatory response, and platelet aggregation. This Loxosceles reclusa (Brown recluse spider) protein is Dermonecrotic toxin LrSicTox-alphaI-1.